The sequence spans 538 residues: Nicotinate phosphoribosyltransferase (538 aa).

Nicotinate is bound by residues Y21 and T210. Position 213 is a phosphohistidine (H213). A nicotinate-binding site is contributed by R318. T380 contacts 5-phospho-alpha-D-ribose 1-diphosphate. S537 carries the post-translational modification Phosphoserine.

The protein belongs to the NAPRTase family. In terms of assembly, homodimer. Mg(2+) serves as cofactor. Mn(2+) is required as a cofactor. In terms of processing, transiently phosphorylated on a His residue during the reaction cycle. Phosphorylation strongly increases the affinity for substrates and increases the rate of nicotinate D-ribonucleotide production. Dephosphorylation regenerates the low-affinity form of the enzyme, leading to product release.

Its subcellular location is the cytoplasm. It is found in the cytosol. It carries out the reaction nicotinate + 5-phospho-alpha-D-ribose 1-diphosphate + ATP + H2O = nicotinate beta-D-ribonucleotide + ADP + phosphate + diphosphate. Its pathway is cofactor biosynthesis; NAD(+) biosynthesis; nicotinate D-ribonucleotide from nicotinate: step 1/1. In terms of biological role, catalyzes the first step in the biosynthesis of NAD from nicotinic acid, the ATP-dependent synthesis of beta-nicotinate D-ribonucleotide from nicotinate and 5-phospho-D-ribose 1-phosphate. Helps prevent cellular oxidative stress via its role in NAD biosynthesis. This chain is Nicotinate phosphoribosyltransferase (NAPRT), found in Homo sapiens (Human).